Consider the following 61-residue polypeptide: Large ribosomal subunit protein uL30 (61 aa).

It belongs to the universal ribosomal protein uL30 family. As to quaternary structure, part of the 50S ribosomal subunit.

This chain is Large ribosomal subunit protein uL30, found in Thermosipho africanus (strain TCF52B).